The following is a 470-amino-acid chain: UDP-glycosyltransferase 72D1 (470 aa).

Residues Ser276, Ala343–Gln345, His360–Glu368, and Tyr382–Gln385 each bind UDP-alpha-D-glucose.

It belongs to the UDP-glycosyltransferase family.

This Arabidopsis thaliana (Mouse-ear cress) protein is UDP-glycosyltransferase 72D1 (UGT72D1).